A 478-amino-acid chain; its full sequence is Argininosuccinate synthase (478 aa).

Residues Ala17–Ser25 and Ala43 contribute to the ATP site. Tyr99 contacts L-citrulline. ATP contacts are provided by Gly129 and Thr131. Thr131, Asn135, and Asp136 together coordinate L-aspartate. Asn135 contacts L-citrulline. Asp136 contacts ATP. Arg139 and Ser192 together coordinate L-citrulline. Residue Asp194 participates in ATP binding. Residues Thr201, Glu203, and Glu280 each coordinate L-citrulline.

The protein belongs to the argininosuccinate synthase family. Type 2 subfamily. As to quaternary structure, homotetramer.

The protein resides in the cytoplasm. The catalysed reaction is L-citrulline + L-aspartate + ATP = 2-(N(omega)-L-arginino)succinate + AMP + diphosphate + H(+). It functions in the pathway amino-acid biosynthesis; L-arginine biosynthesis; L-arginine from L-ornithine and carbamoyl phosphate: step 2/3. This is Argininosuccinate synthase from Leifsonia xyli subsp. xyli (strain CTCB07).